The following is a 582-amino-acid chain: MEAANCSLRVKRPLLDPRFEGYKLSLEPLPCYQLELDAAVAEVKLRDDQYTLEHMHAFGMYNYLHCDAWYQDSVYYIDNLGRIMNLTVMLDTALGKPREVFRLPTDVTAYDNRLCASIHFTSPSWVTLSDGTGRLYVIGTGDRGNSPEKWEIMFNEELGNPFIIIHSISLLKAEEHSVAILLLRIEKEELDLKGSGFYVSLEWVVVTKKKEDSKKYEITKHHVLRGKSVPHYAAIEPNGNGLMIVSYKSFKVISGDQDLEENMDEDRPEKIKVEPLYYWQQSEDDLTVTVRLPESSTKEDIQIQFLPDNINIKLKDIQVLEGKLYSSIDHEGSTWTIKENDSLEISLIKKNEGLMWPELVVGDKQGELLRDPAQCAAIAERLMHLTSDELNPNPDKEKPACNAQELEECDIFFEESSSLCRFDGNTLQTTHVVNLGSNQYLFSVIVDPKEMPCFCLRHDVDALLWQPHCSKQDDMWEHIATFNALGYVQASKRDKKFFACAPNYSYAALCECLRRVFIYRQPTPMSTVLYNRKEGRHVGQVAKQQVASLETNDPILGFQATNERLFVLTTKNLFLIRVNTEN.

Ser-7 is modified (phosphoserine). Residues 272–360 (KVEPLYYWQQ…NEGLMWPELV (89 aa)) enclose the CS domain. Position 387 is a phosphoserine (Ser-387).

It is found in the cytoplasm. The protein localises to the nucleus. The sequence is that of NudC domain-containing protein 1 from Mus musculus (Mouse).